Here is a 135-residue protein sequence, read N- to C-terminus: ATP synthase epsilon chain (135 aa).

Belongs to the ATPase epsilon chain family. In terms of assembly, F-type ATPases have 2 components, CF(1) - the catalytic core - and CF(0) - the membrane proton channel. CF(1) has five subunits: alpha(3), beta(3), gamma(1), delta(1), epsilon(1). CF(0) has three main subunits: a, b and c.

The protein resides in the cell inner membrane. Functionally, produces ATP from ADP in the presence of a proton gradient across the membrane. The protein is ATP synthase epsilon chain of Bradyrhizobium sp. (strain BTAi1 / ATCC BAA-1182).